A 251-amino-acid polypeptide reads, in one-letter code: CCN family member 5 (251 aa).

Residues 1-23 (MRGNPLIHLLAISFLCILSMVYS) form the signal peptide. Residues 24–103 (QLCPAPCACP…EEDDGSCEVN (80 aa)) form the IGFBP N-terminal domain. 6 disulfides stabilise this stretch: Cys-26–Cys-50, Cys-30–Cys-52, Cys-32–Cys-53, Cys-39–Cys-56, Cys-64–Cys-78, and Cys-70–Cys-100. Residues 98-164 (GSCEVNGRRY…GRCCPEWVCD (67 aa)) form the VWFC domain. The 45-residue stretch at 195-239 (CPNWSTAWGPCSTTCGLGIATRVSNQNRFCQLEIQRRLCLSRPCL) folds into the TSP type-1 domain. Asn-197 carries an N-linked (GlcNAc...) asparagine glycan.

The protein belongs to the CCN family.

The protein localises to the secreted. Its function is as follows. May play an important role in modulating bone turnover. Promotes the adhesion of osteoblast cells and inhibits the binding of fibrinogen to integrin receptors. In addition, inhibits osteocalcin production. In Mus musculus (Mouse), this protein is CCN family member 5 (Ccn5).